We begin with the raw amino-acid sequence, 486 residues long: Serine/threonine-protein phosphatase 2A 56 kDa regulatory subunit alpha isoform (486 aa).

A compositionally biased stretch (low complexity) spans 1–18 (MSSSSPPAGAASAAISAS). Positions 1–52 (MSSSSPPAGAASAAISASEKVDGFTRKSVRKAQRQKRSQGSSQFRSQGSQAE) are disordered. Position 2 is an N-acetylserine (serine 2). Basic residues predominate over residues 27–37 (KSVRKAQRQKR). Residues 38–51 (SQGSSQFRSQGSQA) are compositionally biased toward low complexity. 3 positions are modified to phosphoserine: serine 41, serine 42, and serine 49.

It belongs to the phosphatase 2A regulatory subunit B56 family. PP2A consists of a common heterodimeric core enzyme, composed of a 36 kDa catalytic subunit (subunit C) and a 65 kDa constant regulatory subunit (PR65 or subunit A), that associates with a variety of regulatory subunits. Proteins that associate with the core dimer include three families of regulatory subunits B (the R2/B/PR55/B55, R3/B''/PR72/PR130/PR59 and R5/B'/B56 families), the 48 kDa variable regulatory subunit, viral proteins, and cell signaling molecules. Interacts with SGO1. In terms of processing, phosphorylated on serine residues. As to expression, widely expressed with the highest expression in heart and skeletal muscle.

The protein localises to the cytoplasm. The protein resides in the nucleus. It is found in the chromosome. Its subcellular location is the centromere. Functionally, the B regulatory subunit might modulate substrate selectivity and catalytic activity, and might also direct the localization of the catalytic enzyme to a particular subcellular compartment. In Homo sapiens (Human), this protein is Serine/threonine-protein phosphatase 2A 56 kDa regulatory subunit alpha isoform (PPP2R5A).